A 123-amino-acid chain; its full sequence is Ribosome-binding factor A (123 aa).

Belongs to the RbfA family. In terms of assembly, monomer. Binds 30S ribosomal subunits, but not 50S ribosomal subunits or 70S ribosomes.

It is found in the cytoplasm. One of several proteins that assist in the late maturation steps of the functional core of the 30S ribosomal subunit. Associates with free 30S ribosomal subunits (but not with 30S subunits that are part of 70S ribosomes or polysomes). Required for efficient processing of 16S rRNA. May interact with the 5'-terminal helix region of 16S rRNA. The chain is Ribosome-binding factor A from Cupriavidus metallidurans (strain ATCC 43123 / DSM 2839 / NBRC 102507 / CH34) (Ralstonia metallidurans).